A 277-amino-acid chain; its full sequence is Large ribosomal subunit protein uL2 (277 aa).

The interval 215–277 (GIRPTVRGSV…KLIVKRRNDK (63 aa)) is disordered. Residues 264–277 (KYSDKLIVKRRNDK) show a composition bias toward basic and acidic residues.

The protein belongs to the universal ribosomal protein uL2 family. In terms of assembly, part of the 50S ribosomal subunit. Forms a bridge to the 30S subunit in the 70S ribosome.

One of the primary rRNA binding proteins. Required for association of the 30S and 50S subunits to form the 70S ribosome, for tRNA binding and peptide bond formation. It has been suggested to have peptidyltransferase activity; this is somewhat controversial. Makes several contacts with the 16S rRNA in the 70S ribosome. The protein is Large ribosomal subunit protein uL2 of Clostridium acetobutylicum (strain ATCC 824 / DSM 792 / JCM 1419 / IAM 19013 / LMG 5710 / NBRC 13948 / NRRL B-527 / VKM B-1787 / 2291 / W).